A 1750-amino-acid chain; its full sequence is Protein TIC 214 (1750 aa).

6 helical membrane passes run 12–32 (KIIN…ALSI), 69–89 (FIMG…YVAL), 97–117 (ILAL…SFFA), 129–149 (LEIY…SCIL), 177–197 (FAWF…LVWI), and 216–236 (IFVI…SIQC). The span at 260–277 (RERLQKEEERGVEKKEQS) shows a compositional bias: basic and acidic residues. 5 disordered regions span residues 260-282 (RERL…EEDP), 617-638 (ATTT…KKES), 718-738 (STDK…KQRE), 1205-1225 (RNSR…PKPV), and 1419-1512 (ETDS…NKKE). Residues 617 to 629 (ATTTNSKTNTTKD) show a composition bias toward low complexity. Residues 727 to 738 (KKEEKRENKQRE) are compositionally biased toward basic and acidic residues. A compositionally biased stretch (basic and acidic residues) spans 1420-1512 (TDSKQKSETD…TKSDKKNKKE (93 aa)).

Belongs to the TIC214 family. In terms of assembly, part of the Tic complex.

It is found in the plastid. Its subcellular location is the chloroplast inner membrane. In terms of biological role, involved in protein precursor import into chloroplasts. May be part of an intermediate translocation complex acting as a protein-conducting channel at the inner envelope. This Cuscuta reflexa (Southern Asian dodder) protein is Protein TIC 214.